The following is a 389-amino-acid chain: Sterol methyltransferase-like 1 (389 aa).

A helical membrane pass occupies residues 25-45 (IAAGVTAAVVIGGYIWIITEL).

Belongs to the class I-like SAM-binding methyltransferase superfamily. Erg6/SMT family.

It localises to the microsome membrane. Unable to convert squalene, botryococcene, cycloartenol, zymosterol or lanosterol to mono-, di-, tri- or tetramethylated derivatives. The sequence is that of Sterol methyltransferase-like 1 (SMT-1) from Botryococcus braunii (Green alga).